The sequence spans 365 residues: Gibberellin 20 oxidase 1-B (365 aa).

The Fe2OG dioxygenase domain occupies 199 to 299 (GNDSIMRLNY…RKSLAFFLCP (101 aa)). H224, D226, and H280 together coordinate Fe cation. R290 is a catalytic residue.

This sequence belongs to the iron/ascorbate-dependent oxidoreductase family. GA20OX subfamily. Fe cation is required as a cofactor. It depends on L-ascorbate as a cofactor. In terms of tissue distribution, not detected in nodes and the ear of the elongating stem.

It catalyses the reaction gibberellin A12 + 2 2-oxoglutarate + 3 O2 + H(+) = gibberellin A9 + 2 succinate + 3 CO2 + 2 H2O. The enzyme catalyses gibberellin A53 + 2 2-oxoglutarate + 3 O2 + H(+) = gibberellin A20 + 2 succinate + 3 CO2 + 2 H2O. Its function is as follows. Key oxidase enzyme in the biosynthesis of gibberellin that catalyzes the conversion of GA12 and GA53 to GA9 and GA20 respectively, via a three-step oxidation at C-20 of the GA skeleton. This chain is Gibberellin 20 oxidase 1-B (GA20ox1B), found in Triticum aestivum (Wheat).